The chain runs to 293 residues: 4-hydroxy-tetrahydrodipicolinate synthase (293 aa).

Residue threonine 47 coordinates pyruvate. The active-site Proton donor/acceptor is tyrosine 136. Lysine 164 functions as the Schiff-base intermediate with substrate in the catalytic mechanism. Isoleucine 206 contacts pyruvate.

The protein belongs to the DapA family. In terms of assembly, homotetramer; dimer of dimers.

It is found in the cytoplasm. The catalysed reaction is L-aspartate 4-semialdehyde + pyruvate = (2S,4S)-4-hydroxy-2,3,4,5-tetrahydrodipicolinate + H2O + H(+). It participates in amino-acid biosynthesis; L-lysine biosynthesis via DAP pathway; (S)-tetrahydrodipicolinate from L-aspartate: step 3/4. Catalyzes the condensation of (S)-aspartate-beta-semialdehyde [(S)-ASA] and pyruvate to 4-hydroxy-tetrahydrodipicolinate (HTPA). This is 4-hydroxy-tetrahydrodipicolinate synthase from Listeria monocytogenes serotype 4b (strain CLIP80459).